A 494-amino-acid chain; its full sequence is Ribosomal lysine N-methyltransferase 4 (494 aa).

The 241-residue stretch at 25 to 265 (PKIEIKDLCC…KNEQVYNIYG (241 aa)) folds into the SET domain. Tyrosine 264 is an S-adenosyl-L-methionine binding site.

This sequence belongs to the class V-like SAM-binding methyltransferase superfamily. Histone-lysine methyltransferase family. SETD6 subfamily.

It localises to the nucleus. Functionally, S-adenosyl-L-methionine-dependent protein-lysine N-methyltransferase that monomethylates 60S ribosomal protein L42 (RPL42A and RPL42B) at 'Lys-55'. The sequence is that of Ribosomal lysine N-methyltransferase 4 from Saccharomyces cerevisiae (strain ATCC 204508 / S288c) (Baker's yeast).